Consider the following 1021-residue polypeptide: Sodium/potassium-transporting ATPase subunit alpha-1 (1021 aa).

Positions 1–5 (MGKGV) are excised as a propeptide. The span at 1–11 (MGKGVGRDKYE) shows a compositional bias: basic and acidic residues. The tract at residues 1 to 36 (MGKGVGRDKYEPAAVSEHGDKKKAKKERDMDELKKE) is disordered. Topologically, residues 6 to 85 (GRDKYEPAAV…NALTPPPTTP (80 aa)) are cytoplasmic. Lys-9 carries the N6-acetyllysine modification. Tyr-10 bears the Phosphotyrosine mark. Ser-16 carries the post-translational modification Phosphoserine; by PKC. Lys-21 is modified (N6-acetyllysine). A compositionally biased stretch (basic and acidic residues) spans 26–36 (KERDMDELKKE). Phosphoserine occurs at positions 38 and 45. Residues 80–82 (PPP) form a phosphoinositide-3 kinase binding region. The helical transmembrane segment at 86–106 (EWVKFCRQLFGGFSMLLWIGA) threads the bilayer. The Extracellular portion of the chain corresponds to 107–129 (VLCFLAYGIQAATEEEPQNDNLY). The chain crosses the membrane as a helical span at residues 130-150 (LGVVLSAVVIITGCFSYYQEA). Topologically, residues 151–286 (KSSKIMESFK…GGQTPIAAEI (136 aa)) are cytoplasmic. Ser-226 carries the phosphoserine modification. Position 258 is a phosphotyrosine (Tyr-258). A helical transmembrane segment spans residues 287–306 (EHFIHIITGVAVFLGVSFFI). Residues 307 to 318 (LSLILEYTWLEA) lie on the Extracellular side of the membrane. Residues 319-336 (VIFLIGIIVANVPEGLLA) traverse the membrane as a helical segment. The Cytoplasmic segment spans residues 337–770 (TVTVCLTLTA…EEGRLIFDNL (434 aa)). The active-site 4-aspartylphosphate intermediate is the Asp-374. Ser-450 and Ser-482 each carry phosphoserine. Lys-485 lines the ATP pocket. Phosphotyrosine is present on Tyr-540. Positions 594–715 (RAAVPDAVGK…QGAIVAVTGD (122 aa)) are mediates interaction with SCN7A. Ser-666 bears the Phosphoserine mark. The Mg(2+) site is built by Asp-715 and Asp-719. The chain crosses the membrane as a helical span at residues 771–790 (KKSIAYTLTSNIPEITPFLI). Residues 791–800 (FIIANIPLPL) lie on the Extracellular side of the membrane. The helical transmembrane segment at 801-821 (GTVTILCIDLGTDMVPAISLA) threads the bilayer. Residues 822–841 (YEQAESDIMKRQPRNPQTDK) lie on the Cytoplasmic side of the membrane. A helical transmembrane segment spans residues 842 to 864 (LVNERLISMAYGQIGMIQALGGF). At 865-916 (FTYFVIMAENGFLPNHLLGIRVTWDDRWINDVEDSYGQQWTYEQRKIVEFTC) the chain is on the extracellular side. A helical membrane pass occupies residues 917–936 (HTAFFVSIVVVQWADLVICK). At 937-949 (TRRNSVFQQGMKN) the chain is on the cytoplasmic side. Ser-941 carries the phosphoserine; by PKA modification. Residues 950 to 968 (KILIFGLFEETALAAFLSY) form a helical membrane-spanning segment. The Extracellular segment spans residues 969-983 (CPGMGVALRMYPLKP). Residues 984-1004 (TWWFCAFPYSLLIFVYDEVRK) traverse the membrane as a helical segment. Topologically, residues 1005–1021 (LIIRRRPGGWVEKETYY) are cytoplasmic.

The protein belongs to the cation transport ATPase (P-type) (TC 3.A.3) family. Type IIC subfamily. The sodium/potassium-transporting ATPase is composed of a catalytic alpha subunit, an auxiliary non-catalytic beta subunit and an additional regulatory subunit. Interacts with regulatory subunit FXYD1. Interacts with regulatory subunit FXYD3. Interacts with SIK1. Interacts with SLC35G1 and STIM1. Interacts with CLN3; this interaction regulates the sodium/potassium-transporting ATPase complex localization at the plasma membrane. Interacts with SCN7A; activates ATP1A1 P-type sodium:potassium-exchanging transporter activity which indirectly signals to nearby neurons to regulate sodium homeostasis. Post-translationally, phosphorylation on Tyr-10 modulates pumping activity. Phosphorylation of Ser-941 by PKA modulates the response of ATP1A1 to PKC. Dephosphorylation by protein phosphatase 2A (PP2A) following increases in intracellular sodium, leading to increase catalytic activity.

Its subcellular location is the cell membrane. It is found in the basolateral cell membrane. It localises to the sarcolemma. The protein localises to the cell projection. The protein resides in the axon. Its subcellular location is the melanosome. The catalysed reaction is K(+)(out) + Na(+)(in) + ATP + H2O = K(+)(in) + Na(+)(out) + ADP + phosphate + H(+). Functionally, this is the catalytic component of the active enzyme, which catalyzes the hydrolysis of ATP coupled with the exchange of sodium and potassium ions across the plasma membrane. This action creates the electrochemical gradient of sodium and potassium ions, providing the energy for active transport of various nutrients. Could also be part of an osmosensory signaling pathway that senses body-fluid sodium levels and controls salt intake behavior as well as voluntary water intake to regulate sodium homeostasis. The chain is Sodium/potassium-transporting ATPase subunit alpha-1 (ATP1A1) from Bos taurus (Bovine).